The following is a 158-amino-acid chain: 6,7-dimethyl-8-ribityllumazine synthase (158 aa).

5-amino-6-(D-ribitylamino)uracil is bound by residues Phe-23, 61 to 63 (SFE), and 85 to 87 (AVI). Position 90–91 (90–91 (ET)) interacts with (2S)-2-hydroxy-3-oxobutyl phosphate. The Proton donor role is filled by His-93. Position 118 (Phe-118) interacts with 5-amino-6-(D-ribitylamino)uracil. Arg-132 serves as a coordination point for (2S)-2-hydroxy-3-oxobutyl phosphate.

The protein belongs to the DMRL synthase family.

It catalyses the reaction (2S)-2-hydroxy-3-oxobutyl phosphate + 5-amino-6-(D-ribitylamino)uracil = 6,7-dimethyl-8-(1-D-ribityl)lumazine + phosphate + 2 H2O + H(+). It participates in cofactor biosynthesis; riboflavin biosynthesis; riboflavin from 2-hydroxy-3-oxobutyl phosphate and 5-amino-6-(D-ribitylamino)uracil: step 1/2. Its function is as follows. Catalyzes the formation of 6,7-dimethyl-8-ribityllumazine by condensation of 5-amino-6-(D-ribitylamino)uracil with 3,4-dihydroxy-2-butanone 4-phosphate. This is the penultimate step in the biosynthesis of riboflavin. The polypeptide is 6,7-dimethyl-8-ribityllumazine synthase (Prochlorococcus marinus (strain AS9601)).